Reading from the N-terminus, the 729-residue chain is Transketolase (729 aa).

H97 lines the substrate pocket. Thiamine diphosphate is bound by residues H138 and 186–188 (GPL). D227 serves as a coordination point for Mg(2+). G228 and N257 together coordinate thiamine diphosphate. Residues N257 and I259 each contribute to the Mg(2+) site. Residues H332, R423, and S450 each contribute to the substrate site. H332 contributes to the thiamine diphosphate binding site. The active-site Proton donor is the E477. F503 serves as a coordination point for thiamine diphosphate. Substrate-binding residues include H527, D535, and R586.

It belongs to the transketolase family. Homodimer. The cofactor is Mg(2+). Ca(2+) serves as cofactor. Requires Mn(2+) as cofactor. It depends on Co(2+) as a cofactor. Thiamine diphosphate is required as a cofactor.

It catalyses the reaction D-sedoheptulose 7-phosphate + D-glyceraldehyde 3-phosphate = aldehydo-D-ribose 5-phosphate + D-xylulose 5-phosphate. In terms of biological role, catalyzes the transfer of a two-carbon ketol group from a ketose donor to an aldose acceptor, via a covalent intermediate with the cofactor thiamine pyrophosphate. The protein is Transketolase of Streptococcus pyogenes serotype M6 (strain ATCC BAA-946 / MGAS10394).